The sequence spans 694 residues: Elongation factor G (694 aa).

Positions 6–288 (KLYRNIGIAA…GVIEYLPSPT (283 aa)) constitute a tr-type G domain. GTP is bound by residues 15–22 (AHVDAGKT), 86–90 (DTPGH), and 140–143 (NKMD).

This sequence belongs to the TRAFAC class translation factor GTPase superfamily. Classic translation factor GTPase family. EF-G/EF-2 subfamily.

It localises to the cytoplasm. Functionally, catalyzes the GTP-dependent ribosomal translocation step during translation elongation. During this step, the ribosome changes from the pre-translocational (PRE) to the post-translocational (POST) state as the newly formed A-site-bound peptidyl-tRNA and P-site-bound deacylated tRNA move to the P and E sites, respectively. Catalyzes the coordinated movement of the two tRNA molecules, the mRNA and conformational changes in the ribosome. In Legionella pneumophila subsp. pneumophila (strain Philadelphia 1 / ATCC 33152 / DSM 7513), this protein is Elongation factor G.